The primary structure comprises 396 residues: Acetate kinase (396 aa).

Asn8 contributes to the Mg(2+) binding site. Lys15 lines the ATP pocket. Arg89 lines the substrate pocket. Catalysis depends on Asp146, which acts as the Proton donor/acceptor. ATP contacts are provided by residues 206–210, 283–285, and 331–335; these read HIGNG, DMR, and GVGEN. Residue Glu383 coordinates Mg(2+).

It belongs to the acetokinase family. As to quaternary structure, homodimer. Requires Mg(2+) as cofactor. Mn(2+) serves as cofactor.

It is found in the cytoplasm. The catalysed reaction is acetate + ATP = acetyl phosphate + ADP. It functions in the pathway metabolic intermediate biosynthesis; acetyl-CoA biosynthesis; acetyl-CoA from acetate: step 1/2. Functionally, catalyzes the formation of acetyl phosphate from acetate and ATP. Can also catalyze the reverse reaction. This Streptococcus pneumoniae (strain JJA) protein is Acetate kinase.